Reading from the N-terminus, the 237-residue chain is Ribosomal RNA small subunit methyltransferase G (237 aa).

Residues Gly-78, Phe-83, 129-130 (AE), and Arg-148 contribute to the S-adenosyl-L-methionine site. The segment at 216-237 (SKKKETPNKYPRKAGTPNKKPL) is disordered.

Belongs to the methyltransferase superfamily. RNA methyltransferase RsmG family.

It localises to the cytoplasm. Its function is as follows. Specifically methylates the N7 position of a guanine in 16S rRNA. In Streptococcus agalactiae serotype III (strain NEM316), this protein is Ribosomal RNA small subunit methyltransferase G.